The sequence spans 96 residues: ESAT-6-like protein EsxH (96 aa).

Zn(2+) contacts are provided by H14, H70, H76, and E77.

Belongs to the WXG100 family. ESAT-6 subfamily. Forms a tight 1:1 complex with EsxG. When it is complexed to EsxG, interacts directly with host HGS/HRS.

The protein resides in the secreted. EsxH, in complex with EsxG, disrupts ESCRT function and impairs host phagosome maturation, thereby promoting intracellular bacterial growth. The complex acts by interacting, via EsxH, with the host hepatocyte growth factor-regulated tyrosine kinase substrate (HGS/HRS), a component of the ESCRT machinery. This Mycobacterium tuberculosis (strain ATCC 25618 / H37Rv) protein is ESAT-6-like protein EsxH.